The following is a 729-amino-acid chain: Carbon monoxide dehydrogenase/acetyl-CoA synthase subunit alpha (729 aa).

4 residues coordinate [4Fe-4S] cluster: cysteine 506, cysteine 509, cysteine 518, and cysteine 528. Cysteine 509 serves as a coordination point for Ni(2+). Cysteine 595, glycine 596, and cysteine 597 together coordinate Ni(2+).

In terms of assembly, tetramer of two alpha and two beta chains. Requires Ni cation as cofactor. [4Fe-4S] cluster serves as cofactor.

The catalysed reaction is Co(I)-[corrinoid Fe-S protein] + acetyl-CoA + H(+) = methyl-Co(III)-[corrinoid Fe-S protein] + CO + CoA. In terms of biological role, the beta subunit generates CO from CO(2), while the alpha subunit (this protein) combines the CO with CoA and a methyl group to form acetyl-CoA. The methyl group, which is incorporated into acetyl-CoA, is transferred to the alpha subunit by a corrinoid iron-sulfur protein. The polypeptide is Carbon monoxide dehydrogenase/acetyl-CoA synthase subunit alpha (Moorella thermoacetica (Clostridium thermoaceticum)).